Consider the following 216-residue polypeptide: Uridine kinase (216 aa).

16–23 (GASASGKS) contacts ATP.

This sequence belongs to the uridine kinase family.

The protein resides in the cytoplasm. It catalyses the reaction uridine + ATP = UMP + ADP + H(+). The enzyme catalyses cytidine + ATP = CMP + ADP + H(+). Its pathway is pyrimidine metabolism; CTP biosynthesis via salvage pathway; CTP from cytidine: step 1/3. It functions in the pathway pyrimidine metabolism; UMP biosynthesis via salvage pathway; UMP from uridine: step 1/1. This is Uridine kinase from Mannheimia succiniciproducens (strain KCTC 0769BP / MBEL55E).